The primary structure comprises 253 residues: 5'-nucleotidase SurE 2 (253 aa).

4 residues coordinate a divalent metal cation: Asp8, Asp9, Ser39, and Asn92.

The protein belongs to the SurE nucleotidase family. The cofactor is a divalent metal cation.

The protein localises to the cytoplasm. The enzyme catalyses a ribonucleoside 5'-phosphate + H2O = a ribonucleoside + phosphate. In terms of biological role, nucleotidase that shows phosphatase activity on nucleoside 5'-monophosphates. This chain is 5'-nucleotidase SurE 2, found in Burkholderia lata (strain ATCC 17760 / DSM 23089 / LMG 22485 / NCIMB 9086 / R18194 / 383).